We begin with the raw amino-acid sequence, 37 residues long: Large ribosomal subunit protein bL36 (37 aa).

This sequence belongs to the bacterial ribosomal protein bL36 family.

This chain is Large ribosomal subunit protein bL36, found in Magnetococcus marinus (strain ATCC BAA-1437 / JCM 17883 / MC-1).